Here is a 512-residue protein sequence, read N- to C-terminus: MSQAHTPSAPLAEVYDVAVVGGGINGVGIAADAAGRGLSVFLCEQHDLAQHTSSASSKLIHGGLRYLEHYEFRLVREALAEREVLLAKAPHIVKPLRFVLPHRPHLRPAWMIRAGLFLYDHLGKREKLPASRGLRFTGSSPLKAEIRRGFEYSDCAVDDARLVVLNAISAREHGAHVHTRTRCVSARRSKGLWHLHLERSDGSLYSIRARALVNAAGPWVARFIQDDLKQKSPYGIRLIQGSHIIVPKLYEGEHAYILQNEDRRIVFAIPYLDRFTMIGTTDREYQGDPAKVAISEEETAYLLQVVNAHFKQQLAAADILHSFAGVRPLCDDESDEPSAITRDYTLSLSAGNGEPPLLSVFGGKLTTYRKLAESALTQLQPFFANLGPAWTAKAPLPGGEQMQSVEALTEQLANRYAWLDRELALRWARTYGTRVWRLLDGVNGEADLGEHLGGGLYAREVDYLCKHEWAQDAEDILWRRSKLGLFLSPSQQVRLGQYLQSEHPHRPRVHAA.

16-44 (DVAVVGGGINGVGIAADAAGRGLSVFLCE) is an FAD binding site.

It belongs to the FAD-dependent glycerol-3-phosphate dehydrogenase family. FAD is required as a cofactor.

The protein localises to the cytoplasm. The enzyme catalyses a quinone + sn-glycerol 3-phosphate = dihydroxyacetone phosphate + a quinol. The polypeptide is Glycerol-3-phosphate dehydrogenase (glpD) (Pseudomonas aeruginosa (strain ATCC 15692 / DSM 22644 / CIP 104116 / JCM 14847 / LMG 12228 / 1C / PRS 101 / PAO1)).